A 374-amino-acid polypeptide reads, in one-letter code: DNA replication and repair protein RecF (374 aa).

34–41 lines the ATP pocket; the sequence is GNNGSGKT.

This sequence belongs to the RecF family.

It is found in the cytoplasm. Functionally, the RecF protein is involved in DNA metabolism; it is required for DNA replication and normal SOS inducibility. RecF binds preferentially to single-stranded, linear DNA. It also seems to bind ATP. This chain is DNA replication and repair protein RecF, found in Allorhizobium ampelinum (strain ATCC BAA-846 / DSM 112012 / S4) (Agrobacterium vitis (strain S4)).